Consider the following 219-residue polypeptide: Cell division protein B2 (219 aa).

Its function is as follows. Part of a cell division machinery. The polypeptide is Cell division protein B2 (Sulfolobus acidocaldarius (strain ATCC 33909 / DSM 639 / JCM 8929 / NBRC 15157 / NCIMB 11770)).